Here is an 894-residue protein sequence, read N- to C-terminus: Phosphinomethylmalate isomerase (894 aa).

Positions 438, 504, and 507 each coordinate [4Fe-4S] cluster.

Belongs to the aconitase/IPM isomerase family. [4Fe-4S] cluster serves as cofactor.

It carries out the reaction phosphinomethylmalate = phosphinomethylisomalate. It catalyses the reaction phosphinomethylmalate = 2-(phosphinatomethylidene)butanedioate + H2O. The catalysed reaction is 2-(phosphinatomethylidene)butanedioate + H2O = phosphinomethylisomalate. The protein operates within secondary metabolite biosynthesis; bialaphos biosynthesis. Its function is as follows. Isomerase involved in the biosynthesis of phosphinothricin tripeptide (PTT), also known as bialaphos (BA), a natural-product antibiotic and potent herbicide. Probably catalyzes the isomerization of phosphinomethylmalate to phosphinomethylisomalate. Shows no standard aconitase activity with citrate as a substrate and is not able to complement an acnA mutant. The chain is Phosphinomethylmalate isomerase from Streptomyces viridochromogenes (strain DSM 40736 / JCM 4977 / BCRC 1201 / Tue 494).